The primary structure comprises 692 residues: Elongation factor G (692 aa).

The tr-type G domain maps to 8 to 282 (AKTRNIGIMA…AVIAYLPSPL (275 aa)). GTP-binding positions include 17–24 (AHVDAGKT), 81–85 (DTPGH), and 135–138 (NKMD).

Belongs to the TRAFAC class translation factor GTPase superfamily. Classic translation factor GTPase family. EF-G/EF-2 subfamily.

It is found in the cytoplasm. Catalyzes the GTP-dependent ribosomal translocation step during translation elongation. During this step, the ribosome changes from the pre-translocational (PRE) to the post-translocational (POST) state as the newly formed A-site-bound peptidyl-tRNA and P-site-bound deacylated tRNA move to the P and E sites, respectively. Catalyzes the coordinated movement of the two tRNA molecules, the mRNA and conformational changes in the ribosome. This is Elongation factor G from Streptococcus pyogenes serotype M49 (strain NZ131).